Here is a 141-residue protein sequence, read N- to C-terminus: ATP synthase epsilon chain (141 aa).

Belongs to the ATPase epsilon chain family. F-type ATPases have 2 components, CF(1) - the catalytic core - and CF(0) - the membrane proton channel. CF(1) has five subunits: alpha(3), beta(3), gamma(1), delta(1), epsilon(1). CF(0) has three main subunits: a, b and c.

The protein resides in the cell inner membrane. Functionally, produces ATP from ADP in the presence of a proton gradient across the membrane. This chain is ATP synthase epsilon chain, found in Aromatoleum aromaticum (strain DSM 19018 / LMG 30748 / EbN1) (Azoarcus sp. (strain EbN1)).